Here is a 415-residue protein sequence, read N- to C-terminus: CCA-adding enzyme (415 aa).

ATP-binding residues include Ser-52 and Arg-55. CTP-binding residues include Ser-52 and Arg-55. Residues Asp-64, Asp-66, and Asp-116 each contribute to the Mg(2+) site. The ATP site is built by His-139, Lys-159, and Tyr-168. His-139, Lys-159, and Tyr-168 together coordinate CTP.

Belongs to the tRNA nucleotidyltransferase/poly(A) polymerase family. Archaeal CCA-adding enzyme subfamily. Homodimer. It depends on Mg(2+) as a cofactor.

The enzyme catalyses a tRNA precursor + 2 CTP + ATP = a tRNA with a 3' CCA end + 3 diphosphate. It carries out the reaction a tRNA with a 3' CCA end + 2 CTP + ATP = a tRNA with a 3' CCACCA end + 3 diphosphate. Catalyzes the addition and repair of the essential 3'-terminal CCA sequence in tRNAs without using a nucleic acid template. Adds these three nucleotides in the order of C, C, and A to the tRNA nucleotide-73, using CTP and ATP as substrates and producing inorganic pyrophosphate. tRNA 3'-terminal CCA addition is required both for tRNA processing and repair. Also involved in tRNA surveillance by mediating tandem CCA addition to generate a CCACCA at the 3' terminus of unstable tRNAs. While stable tRNAs receive only 3'-terminal CCA, unstable tRNAs are marked with CCACCA and rapidly degraded. This chain is CCA-adding enzyme, found in Pyrobaculum neutrophilum (strain DSM 2338 / JCM 9278 / NBRC 100436 / V24Sta) (Thermoproteus neutrophilus).